We begin with the raw amino-acid sequence, 784 residues long: Receptor-like protein 38 (784 aa).

A signal peptide spans 1 to 30 (MIRSQSYCFLGITITIYFFFCLLPLPNTFA). The Extracellular segment spans residues 31-752 (SPPTQSLCRH…SELEEPVLNW (722 aa)). LRR repeat units follow at residues 109–133 (LQHL…IENL), 134–157 (SHLT…IGNL), 158–180 (NQLE…SFAN), 182–204 (TKLS…LSNL), and 205–227 (TSLA…DLSG). A glycan (N-linked (GlcNAc...) asparagine) is linked at Asn132. N-linked (GlcNAc...) asparagine glycans are attached at residues Asn180, Asn193, and Asn203. The LRR 6; degenerate repeat unit spans residues 228 to 251 (LHNLEQIFGNENSFVGLFPASLLK). LRR repeat units lie at residues 252 to 276 (ISSL…NTSS), 278 to 301 (SRLT…LSKL), 302 to 324 (VNLE…SISK), 326 to 349 (VNLT…IWKP), 351 to 373 (NLQS…EVVN), 374 to 400 (GAKL…NFRF), 402 to 422 (FFLD…LKNS), 423 to 446 (TDFN…CMDS), 447 to 470 (TMLR…LMNC), and 472 to 496 (DMEF…SRKS). N-linked (GlcNAc...) asparagine glycosylation occurs at Asn273. An N-linked (GlcNAc...) asparagine glycan is attached at Asn327. N-linked (GlcNAc...) asparagine glycans are attached at residues Asn421 and Asn432. One copy of the LRR 17; degenerate repeat lies at 497-518 (LMVLVLRSNAFYGPVYNSTTYL). Asn513, Asn544, and Asn562 each carry an N-linked (GlcNAc...) asparagine glycan. The LRR 18 repeat unit spans residues 520 to 544 (FPRLSIIDISNNDFVGSLPQDYFAN). LRR repeat units lie at residues 608–632 (FRGF…IGLL), 633–656 (SELL…LANI), 657–680 (TNLE…LGNL), and 682–705 (FLSN…QFGT). 6 N-linked (GlcNAc...) asparagine glycosylation sites follow: Asn639, Asn655, Asn668, Asn679, Asn687, and Asn707. A helical transmembrane segment spans residues 753 to 773 (IAAAIAFGPGVFCGFVIGHIF). Over 774–784 (TSYKHLWFIAR) the chain is Cytoplasmic.

Belongs to the RLP family.

The protein localises to the cell membrane. The protein is Receptor-like protein 38 of Arabidopsis thaliana (Mouse-ear cress).